The primary structure comprises 190 residues: Thymidylate kinase (190 aa).

7–14 is an ATP binding site; that stretch reads GVDTCGKS.

It belongs to the thymidylate kinase family.

It carries out the reaction dTMP + ATP = dTDP + ADP. Functionally, phosphorylation of dTMP to form dTDP in both de novo and salvage pathways of dTTP synthesis. The polypeptide is Thymidylate kinase (Wolinella succinogenes (strain ATCC 29543 / DSM 1740 / CCUG 13145 / JCM 31913 / LMG 7466 / NCTC 11488 / FDC 602W) (Vibrio succinogenes)).